Here is a 131-residue protein sequence, read N- to C-terminus: uncharacterized protein (131 aa).

The segment at 13–32 is disordered; sequence TYSPLPEPPPTPALGGQRGP.

This is an uncharacterized protein from Homo sapiens (Human).